The chain runs to 85 residues: Large ribosomal subunit protein bL27 (85 aa).

Residues 1–13 (MAKTKSGGSTSNG) show a composition bias toward polar residues. The interval 1-26 (MAKTKSGGSTSNGRDSKGRRLGQKLG) is disordered.

The protein belongs to the bacterial ribosomal protein bL27 family.

The polypeptide is Large ribosomal subunit protein bL27 (Mycoplasma mobile (strain ATCC 43663 / 163K / NCTC 11711) (Mesomycoplasma mobile)).